A 316-amino-acid chain; its full sequence is Beta-lactamase 3 (316 aa).

The first 29 residues, 1-29 (MFVLNKFFTNSHYKKIVPVVLLSCATLIG), serve as a signal peptide directing secretion. Cys30 is lipidated: N-palmitoyl cysteine. A lipid anchor (S-diacylglycerol cysteine) is attached at Cys30. The disordered stretch occupies residues 34 to 53 (NTQSESNKQTNQTNQVKQEN). Positions 40–50 (NKQTNQTNQVK) are enriched in low complexity. Residue Ser95 is the Acyl-ester intermediate of the active site. The active-site Proton acceptor is Glu191. 257–259 (KTG) lines the substrate pocket.

Belongs to the class-A beta-lactamase family.

Its subcellular location is the cell membrane. The catalysed reaction is a beta-lactam + H2O = a substituted beta-amino acid. This is Beta-lactamase 3 (blaZ) from Bacillus cereus.